The chain runs to 262 residues: Acyl-[acyl-carrier-protein]--UDP-N-acetylglucosamine O-acyltransferase (262 aa).

It belongs to the transferase hexapeptide repeat family. LpxA subfamily. Homotrimer.

It localises to the cytoplasm. It carries out the reaction a (3R)-hydroxyacyl-[ACP] + UDP-N-acetyl-alpha-D-glucosamine = a UDP-3-O-[(3R)-3-hydroxyacyl]-N-acetyl-alpha-D-glucosamine + holo-[ACP]. Its pathway is glycolipid biosynthesis; lipid IV(A) biosynthesis; lipid IV(A) from (3R)-3-hydroxytetradecanoyl-[acyl-carrier-protein] and UDP-N-acetyl-alpha-D-glucosamine: step 1/6. Involved in the biosynthesis of lipid A, a phosphorylated glycolipid that anchors the lipopolysaccharide to the outer membrane of the cell. The sequence is that of Acyl-[acyl-carrier-protein]--UDP-N-acetylglucosamine O-acyltransferase from Pectobacterium atrosepticum (strain SCRI 1043 / ATCC BAA-672) (Erwinia carotovora subsp. atroseptica).